We begin with the raw amino-acid sequence, 568 residues long: Protein disconnected (568 aa).

A disordered region spans residues 16–77 (GHGPHSHQHV…PRRWGSPPIN (62 aa)). Basic residues predominate over residues 19-29 (PHSHQHVHSHL). Over residues 30 to 45 (PSHPQPNAASPASSPG) the composition is skewed to low complexity. Residues 46–62 (GSSGSGSGSAAGSGTGS) show a composition bias toward gly residues. C2H2-type zinc fingers lie at residues 92 to 115 (VQCS…SAVH) and 120 to 145 (HKCT…ANPN). Disordered regions lie at residues 134–157 (RRSR…RRKI), 220–364 (LLST…SDAF), 391–419 (SSAS…DSDS), and 501–568 (QQYN…PISV). The segment covering 235–246 (NEQDADPEDDND) has biased composition (acidic residues). The segment covering 253–263 (QANSSSPAASS) has biased composition (polar residues). Residues 282 to 292 (SLSLASSSSIA) are compositionally biased toward low complexity. Over residues 313 to 360 (SEQDREQEQEQEQEREREAEKEQEQDVESDKEHEPEQEHELEREKRSP) the composition is skewed to basic and acidic residues. Low complexity predominate over residues 391–402 (SSASSSSASASA). Basic residues predominate over residues 520-550 (HLTLSHHHQEQHHHLGHHHMGHHHHHHHQHH). Residues 558 to 568 (SPAATNAPISV) show a composition bias toward polar residues.

Expressed at low levels in the adult head and very low, but detectable, levels in the body.

It localises to the nucleus. In terms of biological role, required for the establishment of stable connections between the larval optic nerves, the Bolwig's nerves, and their target cells in the brain during embryonic development. In Drosophila melanogaster (Fruit fly), this protein is Protein disconnected (disco).